The chain runs to 547 residues: Chaperonin GroEL (547 aa).

ATP-binding positions include 30–33 (TLGP), Lys51, 87–91 (DGTTT), Gly415, and Asp495.

It belongs to the chaperonin (HSP60) family. As to quaternary structure, forms a cylinder of 14 subunits composed of two heptameric rings stacked back-to-back. Interacts with the co-chaperonin GroES.

It is found in the cytoplasm. The catalysed reaction is ATP + H2O + a folded polypeptide = ADP + phosphate + an unfolded polypeptide.. Together with its co-chaperonin GroES, plays an essential role in assisting protein folding. The GroEL-GroES system forms a nano-cage that allows encapsulation of the non-native substrate proteins and provides a physical environment optimized to promote and accelerate protein folding. The polypeptide is Chaperonin GroEL (Aggregatibacter actinomycetemcomitans (Actinobacillus actinomycetemcomitans)).